The following is a 264-amino-acid chain: MDVCLSSAQQPGRRGEGLSSPGGWLEAEKKGAPQKDSTGGVLEESNKIEPSLHSLQKFVPTDYASYTQEHYRFAGKEIVIQESIESYGAVVWPGAMALCQYLEEHAEELNFQDAKILEIGAGPGLVSIVASILGAQVTATDLPDVLGNLQYNLLKNTLQCTAHLPEVKELVWGEDLDKNFPKSAFYYDYVLASDVVYHHYFLDKLLTTMVYLSQPGTVLLWANKFRFSTDYEFLDKFKQVFDTTLLAEYPESSVKLFKGILKWD.

Positions 1–10 (MDVCLSSAQQ) are enriched in polar residues. The disordered stretch occupies residues 1 to 46 (MDVCLSSAQQPGRRGEGLSSPGGWLEAEKKGAPQKDSTGGVLEESN). S-adenosyl-L-methionine-binding positions include W92, 120–122 (GAG), D141, W172, and S193.

Belongs to the methyltransferase superfamily. METTL21 family. As to quaternary structure, interacts with members of the heat shock protein 70 families; these proteins may possibly be methylation substrates for the enzyme.

The protein localises to the nucleus. It is found in the cytoplasm. It catalyses the reaction L-lysyl-[protein] + S-adenosyl-L-methionine = N(6)-methyl-L-lysyl-[protein] + S-adenosyl-L-homocysteine + H(+). The enzyme catalyses N(6)-methyl-L-lysyl-[protein] + S-adenosyl-L-methionine = N(6),N(6)-dimethyl-L-lysyl-[protein] + S-adenosyl-L-homocysteine + H(+). The catalysed reaction is N(6),N(6)-dimethyl-L-lysyl-[protein] + S-adenosyl-L-methionine = N(6),N(6),N(6)-trimethyl-L-lysyl-[protein] + S-adenosyl-L-homocysteine + H(+). Functionally, protein-lysine N-methyltransferase using S-adenosyl-L-methionine as methyl donor. Mono-di and trimethylates 'Lys-943' of AARS1. The protein is Protein-lysine methyltransferase METTL21C of Homo sapiens (Human).